The following is a 571-amino-acid chain: Phosphoenolpyruvate-protein phosphotransferase (571 aa).

Residue His-207 is the Tele-phosphohistidine intermediate of the active site. 2 residues coordinate phosphoenolpyruvate: Arg-312 and Arg-348. Positions 435 and 459 each coordinate Mg(2+). Phosphoenolpyruvate contacts are provided by residues 458–459 (ND) and Arg-469. Cys-506 acts as the Proton donor in catalysis.

This sequence belongs to the PEP-utilizing enzyme family. Homodimer. Mg(2+) serves as cofactor.

It is found in the cytoplasm. The enzyme catalyses L-histidyl-[protein] + phosphoenolpyruvate = N(pros)-phospho-L-histidyl-[protein] + pyruvate. Its function is as follows. General (non sugar-specific) component of the phosphoenolpyruvate-dependent sugar phosphotransferase system (sugar PTS). This major carbohydrate active-transport system catalyzes the phosphorylation of incoming sugar substrates concomitantly with their translocation across the cell membrane. Enzyme I transfers the phosphoryl group from phosphoenolpyruvate (PEP) to the phosphoryl carrier protein (HPr). The protein is Phosphoenolpyruvate-protein phosphotransferase (ptsI) of Chlamydia trachomatis serovar D (strain ATCC VR-885 / DSM 19411 / UW-3/Cx).